The following is a 214-amino-acid chain: Adenylate kinase (214 aa).

Residue 10 to 15 (GAGKGT) coordinates ATP. Positions 30-59 (STGDMLRAAVKAGTPLGLEAKKVMDAGQLV) are NMP. Residues Thr-31, Arg-36, 57–59 (QLV), 85–88 (GFPR), and Gln-92 each bind AMP. The interval 122–159 (GRRVHPGSGRVYHVVFNPPKVEGKDDVTGEDLVIRPDD) is LID. ATP is bound by residues Arg-123 and 132-133 (VY). AMP is bound by residues Arg-156 and Arg-167. Gln-200 serves as a coordination point for ATP.

Belongs to the adenylate kinase family. As to quaternary structure, monomer.

It localises to the cytoplasm. It carries out the reaction AMP + ATP = 2 ADP. It participates in purine metabolism; AMP biosynthesis via salvage pathway; AMP from ADP: step 1/1. Functionally, catalyzes the reversible transfer of the terminal phosphate group between ATP and AMP. Plays an important role in cellular energy homeostasis and in adenine nucleotide metabolism. This Shewanella amazonensis (strain ATCC BAA-1098 / SB2B) protein is Adenylate kinase.